An 82-amino-acid polypeptide reads, in one-letter code: Small ribosomal subunit protein uS17 (82 aa).

Belongs to the universal ribosomal protein uS17 family. As to quaternary structure, part of the 30S ribosomal subunit.

One of the primary rRNA binding proteins, it binds specifically to the 5'-end of 16S ribosomal RNA. This Nitrobacter hamburgensis (strain DSM 10229 / NCIMB 13809 / X14) protein is Small ribosomal subunit protein uS17.